The following is a 545-amino-acid chain: Inosine-5'-monophosphate dehydrogenase (545 aa).

2 consecutive CBS domains span residues 138-194 and 201-258; these read MITD…DYDT and MTKE…PDAT. Residues aspartate 295 and 347–349 each bind NAD(+); that span reads GIG. Residues glycine 349 and glycine 351 each coordinate K(+). Serine 352 is a binding site for IMP. Residue cysteine 354 participates in K(+) binding. Catalysis depends on cysteine 354, which acts as the Thioimidate intermediate. IMP is bound by residues 387–389, 410–411, and 434–438; these read DGG, GG, and YRGMG. The Proton acceptor role is filled by arginine 455. Residue glutamate 470 participates in IMP binding. K(+) contacts are provided by glutamate 524, serine 525, and histidine 526.

This sequence belongs to the IMPDH/GMPR family. In terms of assembly, homotetramer. The cofactor is K(+).

The catalysed reaction is IMP + NAD(+) + H2O = XMP + NADH + H(+). Its pathway is purine metabolism; XMP biosynthesis via de novo pathway; XMP from IMP: step 1/1. Its activity is regulated as follows. Mycophenolic acid (MPA) is a non-competitive inhibitor that prevents formation of the closed enzyme conformation by binding to the same site as the amobile flap. In contrast, mizoribine monophosphate (MZP) is a competitive inhibitor that induces the closed conformation. MPA is a potent inhibitor of mammalian IMPDHs but a poor inhibitor of the bacterial enzymes. MZP is a more potent inhibitor of bacterial IMPDH. Its function is as follows. Catalyzes the conversion of inosine 5'-phosphate (IMP) to xanthosine 5'-phosphate (XMP), the first committed and rate-limiting step in the de novo synthesis of guanine nucleotides, and therefore plays an important role in the regulation of cell growth. The sequence is that of Inosine-5'-monophosphate dehydrogenase from Bifidobacterium longum (strain NCC 2705).